Here is a 116-residue protein sequence, read N- to C-terminus: Large ribosomal subunit protein bL19 (116 aa).

Belongs to the bacterial ribosomal protein bL19 family.

In terms of biological role, this protein is located at the 30S-50S ribosomal subunit interface and may play a role in the structure and function of the aminoacyl-tRNA binding site. This Magnetococcus marinus (strain ATCC BAA-1437 / JCM 17883 / MC-1) protein is Large ribosomal subunit protein bL19.